A 222-amino-acid chain; its full sequence is MKRTKSIHHASFRKSWSARHLTPVALAVTAVFMLAGCEKSDETVSLYQNADDCSAANPGKNAECTTAFNNALKEAERTAPKYATREDCVAEFGEGQCQQAPAQAGMAPENQAQAQSSGSFWMPLMAGYMMGRMMGGGAGFAQQPLFSSKNPASPAYGKYTDASGKNYGAAQPGRTMTVPKTAMAPKPATTTTVTRGGFGESVAKQSTMQRSATGTSNRSMGG.

Positions threonine 177–threonine 194 are enriched in low complexity. The disordered stretch occupies residues threonine 177–glycine 222. Residues alanine 203–glycine 222 are compositionally biased toward polar residues.

Belongs to the UPF0441 family.

The protein is UPF0441 protein CKO_04429 of Citrobacter koseri (strain ATCC BAA-895 / CDC 4225-83 / SGSC4696).